The following is a 361-amino-acid chain: Molybdenum import ATP-binding protein ModC (361 aa).

The region spanning 1–228 (MLTINIEKQL…EQMRPWVPLQ (228 aa)) is the ABC transporter domain. 31–38 (GRSGAGKT) lines the ATP pocket. The region spanning 289-356 (RSSIRNVLKG…IKGVTMTQMD (68 aa)) is the Mop domain.

Belongs to the ABC transporter superfamily. Molybdate importer (TC 3.A.1.8) family. As to quaternary structure, the complex is composed of two ATP-binding proteins (ModC), two transmembrane proteins (ModB) and a solute-binding protein (ModA).

The protein localises to the cell inner membrane. The catalysed reaction is molybdate(out) + ATP + H2O = molybdate(in) + ADP + phosphate + H(+). In terms of biological role, part of the ABC transporter complex ModABC involved in molybdenum import. Responsible for energy coupling to the transport system. In Shewanella oneidensis (strain ATCC 700550 / JCM 31522 / CIP 106686 / LMG 19005 / NCIMB 14063 / MR-1), this protein is Molybdenum import ATP-binding protein ModC.